Reading from the N-terminus, the 376-residue chain is Deoxyguanosinetriphosphate triphosphohydrolase-like protein (376 aa).

The HD domain occupies 62 to 198 (RLTHSLEVSA…AALADDISYI (137 aa)).

It belongs to the dGTPase family. Type 2 subfamily.

The protein is Deoxyguanosinetriphosphate triphosphohydrolase-like protein of Rickettsia canadensis (strain McKiel).